A 422-amino-acid chain; its full sequence is Exopolygalacturonase clone GBGE184 (422 aa).

Residues 1–31 (MANARSLVAKANNINVGSLILMALVFGSCVA) form the signal peptide. PbH1 repeat units lie at residues 200–226 (TENVNIQNIKLTAPAESPNTDGIHLSN), 227–248 (ADNVSILDSTIATGDDCVSVGR), 250–270 (SNNVTVERVICGPGHGLSVGS), 280–301 (VSGIHVNNCTMIETDNGLRIKT), and 310–331 (AVDIKFENIIMQSVKNPIIIDQ). Asparagine 229 is a glycosylation site (N-linked (GlcNAc...) asparagine). Aspartate 241 functions as the Proton donor in the catalytic mechanism. A disulfide bridge links cysteine 243 with cysteine 260. The N-linked (GlcNAc...) asparagine glycan is linked to asparagine 252. The active site involves histidine 264. Asparagine 287 carries an N-linked (GlcNAc...) asparagine glycan. 2 disulfides stabilise this stretch: cysteine 366–cysteine 372 and cysteine 404–cysteine 420.

This sequence belongs to the glycosyl hydrolase 28 family.

The protein resides in the secreted. It localises to the cell wall. The catalysed reaction is [(1-&gt;4)-alpha-D-galacturonosyl](n) + H2O = alpha-D-galacturonate + [(1-&gt;4)-alpha-D-galacturonosyl](n-1). In terms of biological role, may function in depolymerizing pectin during pollen development, germination, and tube growth. Acts as an exo-polygalacturonase. The sequence is that of Exopolygalacturonase clone GBGE184 (PGA3) from Arabidopsis thaliana (Mouse-ear cress).